We begin with the raw amino-acid sequence, 239 residues long: Serine protease SplF (239 aa).

The signal sequence occupies residues 1-36; it reads MNKNIIIKSIGALTILTSITGVGTTMVEGIQQTAKA. Catalysis depends on charge relay system residues H75, D114, and S192.

Belongs to the peptidase S1B family.

Its subcellular location is the secreted. The polypeptide is Serine protease SplF (splF) (Staphylococcus aureus (strain USA300)).